Reading from the N-terminus, the 339-residue chain is Arylacetonitrilase (339 aa).

The 286-residue stretch at 5–290 (IRVAVTQAEP…EGIVYADLDL (286 aa)) folds into the CN hydrolase domain. The active-site Proton acceptor is glutamate 45. The active site involves lysine 126. Cysteine 167 serves as the catalytic Nucleophile.

This sequence belongs to the carbon-nitrogen hydrolase superfamily. Nitrilase family.

The catalysed reaction is a nitrile + 2 H2O = a carboxylate + NH4(+). The enzyme catalyses 4-chlorophenylacetonitrile + 2 H2O = 4-chlorophenylacetate + NH4(+). In terms of biological role, nitrilase that hydrolyzes preferentially phenylacetonitrile, (R,S)-mandelonitrile, and 3-indolylacetonitrile. This is Arylacetonitrilase from Fusarium vanettenii (strain ATCC MYA-4622 / CBS 123669 / FGSC 9596 / NRRL 45880 / 77-13-4) (Fusarium solani subsp. pisi).